The primary structure comprises 227 residues: NAD(P)H-hydrate epimerase (227 aa).

Residues Met10 to Leu227 enclose the YjeF N-terminal domain. (6S)-NADPHX is bound at residue Asn62–Asp66. K(+)-binding residues include Asn63 and Asp142. (6S)-NADPHX is bound by residues Gly146 to Pro152 and Asp176. Ser179 serves as a coordination point for K(+).

It belongs to the NnrE/AIBP family. The cofactor is K(+).

The enzyme catalyses (6R)-NADHX = (6S)-NADHX. The catalysed reaction is (6R)-NADPHX = (6S)-NADPHX. In terms of biological role, catalyzes the epimerization of the S- and R-forms of NAD(P)HX, a damaged form of NAD(P)H that is a result of enzymatic or heat-dependent hydration. This is a prerequisite for the S-specific NAD(P)H-hydrate dehydratase to allow the repair of both epimers of NAD(P)HX. The sequence is that of NAD(P)H-hydrate epimerase from Roseobacter litoralis (strain ATCC 49566 / DSM 6996 / JCM 21268 / NBRC 15278 / OCh 149).